The following is a 229-amino-acid chain: Cytidylate kinase (229 aa).

12 to 20 provides a ligand contact to ATP; that stretch reads GPSGAGKGT.

This sequence belongs to the cytidylate kinase family. Type 1 subfamily.

The protein resides in the cytoplasm. The catalysed reaction is CMP + ATP = CDP + ADP. The enzyme catalyses dCMP + ATP = dCDP + ADP. The protein is Cytidylate kinase of Pseudomonas aeruginosa (strain UCBPP-PA14).